Here is an 87-residue protein sequence, read N- to C-terminus: Olfactory receptor-like protein HbT2 (87 aa).

Residues 1 to 8 lie on the Cytoplasmic side of the membrane; that stretch reads KLWRMTGT. A helical membrane pass occupies residues 9-29; sequence WLGGFCHSIIQIPVIIQLPFC. Residues 30–55 are Extracellular-facing; it reads GPNVIDHYFRDLQPLFKLACTDTFME. The chain crosses the membrane as a helical span at residues 56–76; sequence GVIVLAFSGLFSVFSFLILVS. Topologically, residues 77-87 are cytoplasmic; sequence SYIVILVNLRN.

Belongs to the G-protein coupled receptor 1 family.

The protein resides in the cell membrane. Odorant receptor. In Apis mellifera ligustica (Common honeybee), this protein is Olfactory receptor-like protein HbT2.